A 434-amino-acid polypeptide reads, in one-letter code: Enolase (434 aa).

A (2R)-2-phosphoglycerate-binding site is contributed by Q165. Residue E207 is the Proton donor of the active site. Residues D244, E291, and D318 each contribute to the Mg(2+) site. Residues K343, R372, S373, and K394 each contribute to the (2R)-2-phosphoglycerate site. Catalysis depends on K343, which acts as the Proton acceptor.

The protein belongs to the enolase family. Requires Mg(2+) as cofactor.

It localises to the cytoplasm. The protein localises to the secreted. The protein resides in the cell surface. It carries out the reaction (2R)-2-phosphoglycerate = phosphoenolpyruvate + H2O. It participates in carbohydrate degradation; glycolysis; pyruvate from D-glyceraldehyde 3-phosphate: step 4/5. In terms of biological role, catalyzes the reversible conversion of 2-phosphoglycerate (2-PG) into phosphoenolpyruvate (PEP). It is essential for the degradation of carbohydrates via glycolysis. The polypeptide is Enolase (Staphylococcus saprophyticus subsp. saprophyticus (strain ATCC 15305 / DSM 20229 / NCIMB 8711 / NCTC 7292 / S-41)).